We begin with the raw amino-acid sequence, 346 residues long: Methionine import ATP-binding protein MetN 1 (346 aa).

Positions I2–V241 constitute an ABC transporter domain. Position 38–45 (G38–S45) interacts with ATP.

The protein belongs to the ABC transporter superfamily. Methionine importer (TC 3.A.1.24) family. In terms of assembly, the complex is composed of two ATP-binding proteins (MetN), two transmembrane proteins (MetI) and a solute-binding protein (MetQ).

It localises to the cell membrane. It carries out the reaction L-methionine(out) + ATP + H2O = L-methionine(in) + ADP + phosphate + H(+). The enzyme catalyses D-methionine(out) + ATP + H2O = D-methionine(in) + ADP + phosphate + H(+). In terms of biological role, part of the ABC transporter complex MetNIQ involved in methionine import. Responsible for energy coupling to the transport system. This chain is Methionine import ATP-binding protein MetN 1, found in Bacillus anthracis.